The following is a 397-amino-acid chain: ATP phosphoribosyltransferase regulatory subunit (397 aa).

Belongs to the class-II aminoacyl-tRNA synthetase family. HisZ subfamily. In terms of assembly, heteromultimer composed of HisG and HisZ subunits.

Its subcellular location is the cytoplasm. It functions in the pathway amino-acid biosynthesis; L-histidine biosynthesis; L-histidine from 5-phospho-alpha-D-ribose 1-diphosphate: step 1/9. Required for the first step of histidine biosynthesis. May allow the feedback regulation of ATP phosphoribosyltransferase activity by histidine. The protein is ATP phosphoribosyltransferase regulatory subunit of Nitrosococcus oceani (strain ATCC 19707 / BCRC 17464 / JCM 30415 / NCIMB 11848 / C-107).